Here is a 674-residue protein sequence, read N- to C-terminus: DNA ligase (674 aa).

Residues 42 to 46 (DNVYD), 91 to 92 (SM), and Glu121 contribute to the NAD(+) site. Lys123 serves as the catalytic N6-AMP-lysine intermediate. Positions 144, 178, 294, and 318 each coordinate NAD(+). Zn(2+) contacts are provided by Cys412, Cys415, Cys430, and Cys435. Positions 596–674 (VKDSFVAGKT…ETELLANLKD (79 aa)) constitute a BRCT domain.

Belongs to the NAD-dependent DNA ligase family. LigA subfamily. The cofactor is Mg(2+). It depends on Mn(2+) as a cofactor.

It carries out the reaction NAD(+) + (deoxyribonucleotide)n-3'-hydroxyl + 5'-phospho-(deoxyribonucleotide)m = (deoxyribonucleotide)n+m + AMP + beta-nicotinamide D-nucleotide.. In terms of biological role, DNA ligase that catalyzes the formation of phosphodiester linkages between 5'-phosphoryl and 3'-hydroxyl groups in double-stranded DNA using NAD as a coenzyme and as the energy source for the reaction. It is essential for DNA replication and repair of damaged DNA. The protein is DNA ligase of Lacticaseibacillus paracasei (strain ATCC 334 / BCRC 17002 / CCUG 31169 / CIP 107868 / KCTC 3260 / NRRL B-441) (Lactobacillus paracasei).